The primary structure comprises 167 residues: 2-C-methyl-D-erythritol 2,4-cyclodiphosphate synthase (167 aa).

D9 and H11 together coordinate a divalent metal cation. 4-CDP-2-C-methyl-D-erythritol 2-phosphate-binding positions include 9-11 (DVH) and 35-36 (HS). H43 is an a divalent metal cation binding site. 4-CDP-2-C-methyl-D-erythritol 2-phosphate is bound by residues 57–59 (DIG), 62–66 (FPDTD), 133–136 (TTTE), F140, and R143.

Belongs to the IspF family. As to quaternary structure, homotrimer. Requires a divalent metal cation as cofactor.

The catalysed reaction is 4-CDP-2-C-methyl-D-erythritol 2-phosphate = 2-C-methyl-D-erythritol 2,4-cyclic diphosphate + CMP. It participates in isoprenoid biosynthesis; isopentenyl diphosphate biosynthesis via DXP pathway; isopentenyl diphosphate from 1-deoxy-D-xylulose 5-phosphate: step 4/6. Functionally, involved in the biosynthesis of isopentenyl diphosphate (IPP) and dimethylallyl diphosphate (DMAPP), two major building blocks of isoprenoid compounds. Catalyzes the conversion of 4-diphosphocytidyl-2-C-methyl-D-erythritol 2-phosphate (CDP-ME2P) to 2-C-methyl-D-erythritol 2,4-cyclodiphosphate (ME-CPP) with a corresponding release of cytidine 5-monophosphate (CMP). This chain is 2-C-methyl-D-erythritol 2,4-cyclodiphosphate synthase, found in Glaesserella parasuis serovar 5 (strain SH0165) (Haemophilus parasuis).